The primary structure comprises 566 residues: MDGTAESREGTQFGPYRLRRLVGRGGMGDVYEAEDTVRERIVALKLMSETLSSDPVFRTRMQREARTAGRLQEPHVVPIHDFGEIDGQLYVDMRLINGVDLAAMLRRQGPLAPPRAVAIVRQIGSALDAAHAAGATHRDVKPENILVSADDFAYLVDFGIASATTDEKLTQLGNTVGTLYYMAPERFSESHATYRADIYALTCVLYECLTGSPPYQGDQLSVMGAHINQAIPRPSTVRPGIPVAFDAVIARGMAKNPEDRYVTCGDLSAAAHAALATADQDRATDILRRSQVAKLPVPSTHPVSPGTRWPQPTPWAGGAPPWGPPSSPLPRSARQPWLWVGVAVAVVVALAGGLGIALAHPWRSSGPRTSAPPPPPPADAVELRVLNDGVFVGSSVAPTTIDIFNEPICPPCGSFIRSYASDIDTAVADKQLAVRYHLLNFLDDQSHSKNYSTRAVAASYCVAGQNDPKLYASFYSALFGSDFQPQENAASDRTDAELAHLAQTVGAEPTAISCIKSGADLGTAQTKATNASETLAGFNASGTPFVWDGSMVVNYQDPSWLARLIG.

At 1–337 (MDGTAESREG…PLPRSARQPW (337 aa)) the chain is on the cytoplasmic side. Ser-7 carries the phosphoserine; by autocatalysis modification. Position 11 is a phosphothreonine; by autocatalysis (Thr-11). Residues 16–275 (YRLRRLVGRG…DLSAAAHAAL (260 aa)) enclose the Protein kinase domain. ATP is bound by residues 22-30 (VGRGGMGDV) and Lys-45. Phosphothreonine; by autocatalysis occurs at positions 50 and 59. Asp-139 acts as the Proton acceptor in catalysis. A phosphothreonine; by autocatalysis mark is found at Thr-170, Thr-175, and Thr-178. The disordered stretch occupies residues 296 to 330 (PVPSTHPVSPGTRWPQPTPWAGGAPPWGPPSSPLP). A helical membrane pass occupies residues 338–358 (LWVGVAVAVVVALAGGLGIAL). At 359–566 (AHPWRSSGPR…DPSWLARLIG (208 aa)) the chain is on the extracellular side.

It belongs to the protein kinase superfamily. Ser/Thr protein kinase family. Homodimer. Post-translationally, autophosphorylated on serine and threonine residues. Dephosphorylated by PstP.

It localises to the cell membrane. The enzyme catalyses L-seryl-[protein] + ATP = O-phospho-L-seryl-[protein] + ADP + H(+). The catalysed reaction is L-threonyl-[protein] + ATP = O-phospho-L-threonyl-[protein] + ADP + H(+). In terms of biological role, a serine/threonine-protein kinase, acts on HupB in vitro, modifying at least 2 Ser and 8 Thr residues. Important for bacterial survival in the host during infection. The polypeptide is Serine/threonine-protein kinase PknE (Mycobacterium tuberculosis (strain ATCC 25177 / H37Ra)).